Here is a 568-residue protein sequence, read N- to C-terminus: Mannitol 2-dehydrogenase (568 aa).

109–120 is a binding site for NAD(+); that stretch reads IVHVGVGGFHRA.

It belongs to the mannitol dehydrogenase family. As to quaternary structure, monomer.

It carries out the reaction D-mannitol + NAD(+) = D-fructose + NADH + H(+). Functionally, catalyzes the NAD(H)-dependent interconversion of D-fructose and D-mannitol in the mannitol metabolic pathway. In Phaeosphaeria nodorum (strain SN15 / ATCC MYA-4574 / FGSC 10173) (Glume blotch fungus), this protein is Mannitol 2-dehydrogenase.